The sequence spans 331 residues: Ketol-acid reductoisomerase (NADP(+)) (331 aa).

The KARI N-terminal Rossmann domain occupies 2–182 (AKIYTDKDAS…GATRAGVIET (181 aa)). Residues 25 to 28 (YGIQ), Arg-48, Ser-53, and 83 to 86 (DMEQ) contribute to the NADP(+) site. His-108 is an active-site residue. Residue Gly-134 coordinates NADP(+). The KARI C-terminal knotted domain occupies 183 to 328 (TFAEETETDL…AEMRKLLFGR (146 aa)). Residues Asp-191, Glu-195, Glu-227, and Glu-231 each coordinate Mg(2+). Ser-252 serves as a coordination point for substrate.

This sequence belongs to the ketol-acid reductoisomerase family. It depends on Mg(2+) as a cofactor.

It carries out the reaction (2R)-2,3-dihydroxy-3-methylbutanoate + NADP(+) = (2S)-2-acetolactate + NADPH + H(+). The enzyme catalyses (2R,3R)-2,3-dihydroxy-3-methylpentanoate + NADP(+) = (S)-2-ethyl-2-hydroxy-3-oxobutanoate + NADPH + H(+). It functions in the pathway amino-acid biosynthesis; L-isoleucine biosynthesis; L-isoleucine from 2-oxobutanoate: step 2/4. It participates in amino-acid biosynthesis; L-valine biosynthesis; L-valine from pyruvate: step 2/4. Functionally, involved in the biosynthesis of branched-chain amino acids (BCAA). Catalyzes an alkyl-migration followed by a ketol-acid reduction of (S)-2-acetolactate (S2AL) to yield (R)-2,3-dihydroxy-isovalerate. In the isomerase reaction, S2AL is rearranged via a Mg-dependent methyl migration to produce 3-hydroxy-3-methyl-2-ketobutyrate (HMKB). In the reductase reaction, this 2-ketoacid undergoes a metal-dependent reduction by NADPH to yield (R)-2,3-dihydroxy-isovalerate. The protein is Ketol-acid reductoisomerase (NADP(+)) of Pyrobaculum islandicum (strain DSM 4184 / JCM 9189 / GEO3).